The following is a 118-amino-acid chain: Mating-type P-specific polypeptide Pc (118 aa).

A DNA-binding region (HMG box) is located at residues 29 to 97 (KTTIYKNGFM…VRRQIAKLER (69 aa)).

It localises to the nucleus. Its function is as follows. Mating type proteins are sequence specific DNA-binding proteins that act as master switches in yeast differentiation by controlling gene expression in a cell type-specific fashion. Required for conjugation and efficient meiosis. This is Mating-type P-specific polypeptide Pc (mat2-Pc) from Schizosaccharomyces pombe (Fission yeast).